Consider the following 274-residue polypeptide: MALGNALVEARDRVAWRLNIKVAQQAQKLVYRYATRRLKDDDVVFLNYGYEEDPPMGIPLSESDELNRYSIQLYHSTAAQADVEGKRVLEVGCGHGGGASYLARTFRPATYTGLDLNSDGINFCRRRHNIAGLEFVQGDAQDLPFPDKNFDAVLNVESSHLYPRFDVFLTEVARVLRPGGYFLYTDARPRYDIPEWERALADAPLQMLSQRAINFEVVRGMEKNLDALESVVDRVAPALLRDWIQKYGPARRAYEELRENTTEYRMYCFVKPAE.

Belongs to the methyltransferase superfamily.

It carries out the reaction a fatty acid + S-adenosyl-L-methionine = a fatty acid methyl ester + S-adenosyl-L-homocysteine. O-methyltransferase that modifies the hydroxy group of the fatty acids. Oleate is the most effective fatty acid acceptor. In Mycolicibacterium smegmatis (strain ATCC 700084 / mc(2)155) (Mycobacterium smegmatis), this protein is Fatty-acid O-methyltransferase (mtf2).